We begin with the raw amino-acid sequence, 91 residues long: Sec-independent protein translocase protein TatA (91 aa).

Residues 1–21 (MGIFDWKHWIVILIVVVLVFG) form a helical membrane-spanning segment. Residues 42–91 (AMHDDDKPAEQPAPQPQQAQPAPQGSPLNQPHTIDAQAHKVDEPIRKDQV) are disordered. Low complexity predominate over residues 51 to 64 (EQPAPQPQQAQPAP). A compositionally biased stretch (basic and acidic residues) spans 78–91 (QAHKVDEPIRKDQV).

It belongs to the TatA/E family. As to quaternary structure, the Tat system comprises two distinct complexes: a TatABC complex, containing multiple copies of TatA, TatB and TatC subunits, and a separate TatA complex, containing only TatA subunits. Substrates initially bind to the TatABC complex, which probably triggers association of the separate TatA complex to form the active translocon.

Its subcellular location is the cell inner membrane. Part of the twin-arginine translocation (Tat) system that transports large folded proteins containing a characteristic twin-arginine motif in their signal peptide across membranes. TatA could form the protein-conducting channel of the Tat system. In Pseudomonas syringae pv. tomato (strain ATCC BAA-871 / DC3000), this protein is Sec-independent protein translocase protein TatA.